A 303-amino-acid chain; its full sequence is Sulfate adenylyltransferase subunit 2 (303 aa).

Positions 282–303 are disordered; sequence SGRLIDHDESGSMEKKKREGYF.

This sequence belongs to the PAPS reductase family. CysD subfamily. In terms of assembly, heterodimer composed of CysD, the smaller subunit, and CysN.

The enzyme catalyses sulfate + ATP + H(+) = adenosine 5'-phosphosulfate + diphosphate. It participates in sulfur metabolism; hydrogen sulfide biosynthesis; sulfite from sulfate: step 1/3. In terms of biological role, with CysN forms the ATP sulfurylase (ATPS) that catalyzes the adenylation of sulfate producing adenosine 5'-phosphosulfate (APS) and diphosphate, the first enzymatic step in sulfur assimilation pathway. APS synthesis involves the formation of a high-energy phosphoric-sulfuric acid anhydride bond driven by GTP hydrolysis by CysN coupled to ATP hydrolysis by CysD. In Maricaulis maris (strain MCS10) (Caulobacter maris), this protein is Sulfate adenylyltransferase subunit 2.